Reading from the N-terminus, the 90-residue chain is NELL2-interacting cell ontogeny regulator 1 (90 aa).

A signal peptide spans 1 to 28 (MAPALRSLLSPRTLLLLLLSLALLGARA).

This sequence belongs to the NICOL family. As to quaternary structure, interacts with NELL2; triggers epididymal differentiation. Interacts with cell surface receptor TFRC; the interaction mediates uptake of NICOL1 into fibroblasts. As to expression, expression is enriched in both male and female reproductive organs, including the testis, epididymis, seminal vesicles, coagulating glands, ovary and uterus, and in various non-reproductive organs such as brain, thymus and liver. In testis, expressed in both germ cells and Sertoli cells. Also expressed at low levels in the kidney. Expressed during neocortex and cerebellum development.

Its subcellular location is the secreted. The protein localises to the cytoplasm. It localises to the perinuclear region. In terms of biological role, mRNA-binding protein which interacts with a range of target mRNAs including SERPINE1, ACTA2, CCN2 and COL4A1 and may promote extracellular matrix production. Binds to the 3'-UTR of SERPINE1 mRNA and stabilizes the mRNA, possibly by competing for binding with SERBP1 and preventing SERBP1-mediated mRNA degradation. Also binds to the 3'-UTR of ACTA2. Testis-derived lumicrine factor that triggers epididymal differentiation and sperm maturation. The polypeptide is NELL2-interacting cell ontogeny regulator 1 (Mus musculus (Mouse)).